The chain runs to 168 residues: MAPLNMEQGKRYAMLVNCSRGITFSFNKSYAPNLTVVYVHCLNTAALRPEYNPTTPSFAKILSNILKSVGLGIGAACSLTLAKSRGCVTMVAKIPAAPPYHHGYLIFLPADSFALVDMPSSCCVIFSTLSEQEKRTSTHKYAYDYVYPYIYIHYKPTARPFPAPNIAA.

This is an uncharacterized protein from Saccharomyces cerevisiae (strain ATCC 204508 / S288c) (Baker's yeast).